The sequence spans 342 residues: CMP-N-acetylneuraminate-beta-galactosamide-alpha-2,3-sialyltransferase 1 (342 aa).

The Cytoplasmic segment spans residues 1–10; sequence MVTVRKRNVK. A helical; Signal-anchor for type II membrane protein membrane pass occupies residues 11 to 28; that stretch reads VFTFAFVLITVTSFLLNY. The Lumenal portion of the chain corresponds to 29–342; it reads KHQVTMTTWD…IEKIKFFKGR (314 aa). Disulfide bonds link C61–C66, C63–C141, and C144–C283. Residue N81 is glycosylated (N-linked (GlcNAc...) asparagine). Q107 contributes to the substrate binding site. A glycan (N-linked (GlcNAc...) asparagine) is linked at N116. Residues N149 and N172 each contribute to the substrate site. N-linked (GlcNAc...) asparagine glycosylation is found at N203 and N229. Residues Y232, Y268, G272, G292, and H301 each contribute to the substrate site. The N-linked (GlcNAc...) asparagine glycan is linked to N306. H318 provides a ligand contact to substrate. Residue N325 is glycosylated (N-linked (GlcNAc...) asparagine).

Belongs to the glycosyltransferase 29 family. The soluble form derives from the membrane form by proteolytic processing.

It is found in the golgi apparatus. Its subcellular location is the golgi stack membrane. It localises to the secreted. The catalysed reaction is a beta-D-galactosyl-(1-&gt;3)-N-acetyl-alpha-D-galactosaminyl derivative + CMP-N-acetyl-beta-neuraminate = an N-acetyl-alpha-neuraminyl-(2-&gt;3)-beta-D-galactosyl-(1-&gt;3)-N-acetyl-alpha-D-galactosaminyl derivative + CMP + H(+). It functions in the pathway protein modification; protein glycosylation. In terms of biological role, responsible for the synthesis of the sequence NeuAc-alpha-2,3-Gal-beta-1,3-GalNAc- found on sugar chains O-linked to Thr or Ser and also as a terminal sequence on certain gangliosides. SIAT4A and SIAT4B sialylate the same acceptor substrates but exhibit different Km values. This chain is CMP-N-acetylneuraminate-beta-galactosamide-alpha-2,3-sialyltransferase 1 (ST3GAL1), found in Gallus gallus (Chicken).